The primary structure comprises 67 residues: Small ribosomal subunit protein bS21 (67 aa).

The protein belongs to the bacterial ribosomal protein bS21 family.

The chain is Small ribosomal subunit protein bS21 from Paramagnetospirillum magneticum (strain ATCC 700264 / AMB-1) (Magnetospirillum magneticum).